A 403-amino-acid polypeptide reads, in one-letter code: 26S proteasome regulatory subunit 8 (403 aa).

186–193 lines the ATP pocket; sequence GPPGTGKT.

It belongs to the AAA ATPase family.

The protein localises to the cytoplasm. It localises to the nucleus. The 26S proteasome is involved in the ATP-dependent degradation of ubiquitinated proteins. The regulatory (or ATPase) complex confers ATP dependency and substrate specificity to the 26S complex. The chain is 26S proteasome regulatory subunit 8 (psmC5) from Dictyostelium discoideum (Social amoeba).